The primary structure comprises 769 residues: Glutathione biosynthesis bifunctional protein GshAB (769 aa).

The tract at residues M1–I347 is glutamate--cysteine ligase. The region spanning K514–F768 is the ATP-grasp domain. S541 to R599 serves as a coordination point for ATP. Residues D721, E738, and N740 each contribute to the Mg(2+) site. D721, E738, and N740 together coordinate Mn(2+).

It in the N-terminal section; belongs to the glutamate--cysteine ligase type 1 family. Type 2 subfamily. As to quaternary structure, monomer. Mg(2+) is required as a cofactor. Requires Mn(2+) as cofactor.

It carries out the reaction L-cysteine + L-glutamate + ATP = gamma-L-glutamyl-L-cysteine + ADP + phosphate + H(+). It catalyses the reaction gamma-L-glutamyl-L-cysteine + glycine + ATP = glutathione + ADP + phosphate + H(+). Its pathway is sulfur metabolism; glutathione biosynthesis; glutathione from L-cysteine and L-glutamate: step 1/2. It participates in sulfur metabolism; glutathione biosynthesis; glutathione from L-cysteine and L-glutamate: step 2/2. Functionally, synthesizes glutathione from L-glutamate and L-cysteine via gamma-L-glutamyl-L-cysteine. The protein is Glutathione biosynthesis bifunctional protein GshAB of Listeria innocua serovar 6a (strain ATCC BAA-680 / CLIP 11262).